Consider the following 237-residue polypeptide: Uridylate kinase (237 aa).

ATP is bound at residue 11–14; that stretch reads KLSG. Residues 18-23 form an involved in allosteric activation by GTP region; sequence GGGGIG. Residue glycine 52 participates in UMP binding. The ATP site is built by glycine 53 and arginine 57. UMP is bound by residues aspartate 72 and 133 to 140; that span reads SGMPYFST. ATP-binding residues include glutamine 161, tyrosine 167, and aspartate 170.

This sequence belongs to the UMP kinase family. Homohexamer.

Its subcellular location is the cytoplasm. The enzyme catalyses UMP + ATP = UDP + ADP. It functions in the pathway pyrimidine metabolism; CTP biosynthesis via de novo pathway; UDP from UMP (UMPK route): step 1/1. Allosterically activated by GTP. Inhibited by UTP. Its function is as follows. Catalyzes the reversible phosphorylation of UMP to UDP. The polypeptide is Uridylate kinase (Cutibacterium acnes (strain DSM 16379 / KPA171202) (Propionibacterium acnes)).